Here is a 388-residue protein sequence, read N- to C-terminus: Ovalbumin-related protein Y (388 aa).

Cys-74 and Cys-121 form a disulfide bridge. N-linked (GlcNAc...) asparagine glycosylation is found at Asn-95, Asn-215, Asn-293, and Asn-312.

The protein belongs to the serpin family. Ov-serpin subfamily. Post-translationally, N-glycosylated on at least two Asn residues by ovomucoid type carbohydrate units. The N-terminus is blocked. In terms of tissue distribution, major protein of egg white. Expressed in the magnum of the oviduct (at protein level).

It is found in the secreted. The chain is Ovalbumin-related protein Y (SERPINB14B) from Gallus gallus (Chicken).